The following is a 372-amino-acid chain: Flagellar P-ring protein (372 aa).

Positions 1 to 26 are cleaved as a signal peptide; the sequence is MNLSSLPFRLLAAAVALCAIAAPASA.

This sequence belongs to the FlgI family. In terms of assembly, the basal body constitutes a major portion of the flagellar organelle and consists of four rings (L,P,S, and M) mounted on a central rod.

It localises to the periplasm. Its subcellular location is the bacterial flagellum basal body. Its function is as follows. Assembles around the rod to form the L-ring and probably protects the motor/basal body from shearing forces during rotation. This Xanthomonas campestris pv. campestris (strain B100) protein is Flagellar P-ring protein.